Reading from the N-terminus, the 214-residue chain is Probable nicotinate-nucleotide adenylyltransferase (214 aa).

This sequence belongs to the NadD family.

The enzyme catalyses nicotinate beta-D-ribonucleotide + ATP + H(+) = deamido-NAD(+) + diphosphate. The protein operates within cofactor biosynthesis; NAD(+) biosynthesis; deamido-NAD(+) from nicotinate D-ribonucleotide: step 1/1. Functionally, catalyzes the reversible adenylation of nicotinate mononucleotide (NaMN) to nicotinic acid adenine dinucleotide (NaAD). This chain is Probable nicotinate-nucleotide adenylyltransferase, found in Buchnera aphidicola subsp. Acyrthosiphon pisum (strain 5A).